The sequence spans 63 residues: Serine protease inhibitor 3 (63 aa).

A signal peptide spans 1 to 23; the sequence is MAKLLAVFLVLLIAALVCEQALA. Intrachain disulfides connect Cys24/Cys39, Cys34/Cys52, and Cys37/Cys47. Residues 24-55 enclose the Pacifastin domain; that stretch reads CTPGSRKYDGCNWCTCSSGGAWICTLKYCPPS.

This sequence belongs to the protease inhibitor I19 family. In terms of tissue distribution, expressed in hemolymph, ovaries, testes and fat body of adults but are absent in the gut. Also present in larval hemolymph and fat body.

It localises to the secreted. Its function is as follows. In vitro, active against alpha-chymotrypsin. This is Serine protease inhibitor 3 from Schistocerca gregaria (Desert locust).